The chain runs to 1284 residues: MEVTNLIEKCTKHSKDFATEVEKLWNDELSSESGLSRKTRNVIRNILRDITKSLTTDKKSKCFRILERSTINGEQIKDVYKTIFNNGVDVESRINTTGKYVLFTVMTYAAAELRLIKSDEIFALLSRFFNMICDIHRKYGCGNMFVGIPAALINLLEIDQINKLFSVFSTRYDAKTFIYTEYFLFLNINHYLLVSGSELFINVAYGPASFSSPISVPDYIMEALTFKACDHIMKSGDLKYTYAFTKKVKDLFNTKSDSVYQYVRLHEMSYDGVSEDTDDDDEVFAILNLSIDSSVDRYRNRVLLLTPEVASLRKEYSDVEPDYKYLMDEEVPAYDKHLPKPITNTGIEEPHATGGDKEEQEQQPVKVVQSKPDDGITPYNPFEDPDYVPTITKTVLGIADYQLVINKLIEWLDKCEEECGNGGEYKTELEEAKRKLTELNLELSDKLSKIRTLERDSVYKTERIDRLTKEIKELRDIQNGTDDGSDSSEIDKKTIRELRESLDREREMRTELERELDTIRDGKVEGSCQRELELSRMWLKQRDDDLRAEIDKRRNVEWELSRLRRDIKECDKYKEDLDKAKTTISNYVSRISTLESEIAKYQQDRDTLSVVRRELEEERRRVRDLESRLDECTRNQEDTQEVDALRSRIRELENKLADCMESGGGNLTEISRLQSKISDLERQLRECRGNATEISRLQYRITDLERQLNDCRRNNENNADTEREMQRLRDRITDLERQLSDCRRNNESNADMEREMQRLRDRIMDLDRQLNECKRDGNGTSSEEVNRLKTRIRDLERSLEICSKDESELYSAYKSELGRAREQISNLQESLRRERESDKTDSYYRRELTRERNKIVELEKELNKCFDTNHAKYIDEINSKKTRISDLERQLAACKSNGGSNGDMDQYKREIESLKRELAECRRGNNGSHSDCKYYDEEAREEVKRLRQELTQLHEDLKRARESDKNDSYYKRELERQRAKVIEVEKELERYFDDSRLAECKRHGDEMLRKIADLEKKLRDGGNGNGGNGCTSSCEFERKRIAVLEVEVRKSMETIKSLEKFMEFDRLQKDCADKLDREKERRMKAERDLEREIARKNCGGNPCERELESERSNVKRLEYQLDAEKEKVKFYKRELERDRYLSSRYLTSSSDPDEKPLPNYTFPRIEVEPLTTEDTEPKPVEVVPPSSDVTEPISSGVTPSVDAEPEHPQLSEYQTSVSQVAVTPPPKPETPQISEYQDYSELYSASNNTESKNVFSELAYLDDLDKLDDIDEYLLNNIMPEKTV.

The disordered stretch occupies residues 340–383 (KPITNTGIEEPHATGGDKEEQEQQPVKVVQSKPDDGITPYNPFE). A compositionally biased stretch (basic and acidic residues) spans 348-357 (EEPHATGGDK). 10 repeat units span residues 611 to 637 (VRRE…RNQE), 638 to 665 (DTQE…SGGG), 666 to 689 (NLTE…ECRG), 690 to 720 (NATE…NNAD), 721 to 751 (TERE…SNAD), 752 to 780 (MERE…GNGT), 781 to 811 (SSEE…ELYS), 812 to 842 (AYKS…KTDS), 843 to 871 (YYRR…TNHA), and 872 to 912 (KYID…REIE). The segment at 611 to 912 (VRRELEEERR…DMDQYKREIE (302 aa)) is 10 X approximate tandem repeats. A disordered region spans residues 1169–1234 (PLTTEDTEPK…PPKPETPQIS (66 aa)). Residues 1180 to 1192 (VEVVPPSSDVTEP) are compositionally biased toward low complexity. Positions 1211 to 1221 (SEYQTSVSQVA) are enriched in polar residues.

Belongs to the poxviridae A25 protein family. As to quaternary structure, interacts (via N-terminus) with protein A26.

It is found in the virion. Its function is as follows. Structural protein that forms a matrix surrounding the mature virion (MV) through interaction with protein A26. Presence of protein A25 in the virion structurally prevents direct virus-cell fusion mechanism. This chain is A-type inclusion protein A25 homolog (ATI), found in Apodemus sylvaticus (European woodmouse).